Reading from the N-terminus, the 274-residue chain is Transcription factor MYB32 (274 aa).

HTH myb-type domains are found at residues 9-61 (KDHT…INYL) and 62-116 (RPDL…KRKL). 2 consecutive DNA-binding regions (H-T-H motif) follow at residues 37–61 (WRSL…INYL) and 89–112 (WSLI…NTHV). The tract at residues 123-144 (PATHRPINETKTSQDSSDSSKT) is disordered.

Mostly expressed in roots, and, to a lower extent, in stems, flower buds, and siliques.

The protein resides in the nucleus. The chain is Transcription factor MYB32 (MYB32) from Arabidopsis thaliana (Mouse-ear cress).